The chain runs to 427 residues: Enolase (427 aa).

Q163 is a (2R)-2-phosphoglycerate binding site. E205 (proton donor) is an active-site residue. 3 residues coordinate Mg(2+): D242, E285, and D312. Positions 337, 366, 367, and 388 each coordinate (2R)-2-phosphoglycerate. K337 (proton acceptor) is an active-site residue.

Belongs to the enolase family. It depends on Mg(2+) as a cofactor.

It is found in the cytoplasm. Its subcellular location is the secreted. The protein localises to the cell surface. It catalyses the reaction (2R)-2-phosphoglycerate = phosphoenolpyruvate + H2O. Its pathway is carbohydrate degradation; glycolysis; pyruvate from D-glyceraldehyde 3-phosphate: step 4/5. In terms of biological role, catalyzes the reversible conversion of 2-phosphoglycerate (2-PG) into phosphoenolpyruvate (PEP). It is essential for the degradation of carbohydrates via glycolysis. The polypeptide is Enolase (Azorhizobium caulinodans (strain ATCC 43989 / DSM 5975 / JCM 20966 / LMG 6465 / NBRC 14845 / NCIMB 13405 / ORS 571)).